Consider the following 176-residue polypeptide: MEWKSTTVLVVSRNGKTVMAGDGQVTYGNTVMKHGARKIRKIGDGQVLAGFAGSVADAMALFDRFESKLKEWGGNLTKAAVELAKDWRTDRVLRRLEALLLVADRDNVLIISGTGEVVQPDDNVAAIGSGAPYAIAAARALIRNTDLDAREIVEKSMQIASEICIYTNGNITIEEI.

Threonine 6 is a catalytic residue. Residues serine 161, cysteine 164, and threonine 167 each contribute to the Na(+) site.

The protein belongs to the peptidase T1B family. HslV subfamily. A double ring-shaped homohexamer of HslV is capped on each side by a ring-shaped HslU homohexamer. The assembly of the HslU/HslV complex is dependent on binding of ATP.

It is found in the cytoplasm. It carries out the reaction ATP-dependent cleavage of peptide bonds with broad specificity.. With respect to regulation, allosterically activated by HslU binding. Functionally, protease subunit of a proteasome-like degradation complex believed to be a general protein degrading machinery. The sequence is that of ATP-dependent protease subunit HslV from Pseudothermotoga lettingae (strain ATCC BAA-301 / DSM 14385 / NBRC 107922 / TMO) (Thermotoga lettingae).